We begin with the raw amino-acid sequence, 335 residues long: uncharacterized protein (335 aa).

Residues 21 to 258 (VMTSDLRKVY…QNTYHVQGQN (238 aa)) enclose the ABC transporter domain. 60–67 (GPNGAGKT) contributes to the ATP binding site.

This sequence belongs to the ABC transporter superfamily.

This is an uncharacterized protein from Nostoc sp. (strain PCC 7120 / SAG 25.82 / UTEX 2576).